Reading from the N-terminus, the 413-residue chain is Transmembrane protein 184A (413 aa).

A run of 7 helical transmembrane segments spans residues 47–69 (WLFL…ALVL), 93–113 (LLLI…LLGD), 130–150 (FVIY…GAIM), 187–207 (LQFC…QAFG), 223–243 (VTLI…LFYF), 258–278 (FLTI…LAIL), and 300–320 (LAAG…SVAL). Residues 372–413 (QHYTQQATHEAPRPGTHPSGGSGGSRKSRSLEKRMLIPSEDL) are disordered.

It belongs to the TMEM184 family. As to expression, expressed in vascular cells (at protein level).

It localises to the cell membrane. The protein localises to the cytoplasm. The protein resides in the perinuclear region. It is found in the cytoplasmic vesicle membrane. Its subcellular location is the early endosome membrane. It localises to the endosome. The protein localises to the cytoplasmic vesicle. The protein resides in the secretory vesicle membrane. In terms of biological role, acts as a heparin receptor in vascular cells. May be involved in vesicle transport in exocrine cells and Sertoli cells. In Homo sapiens (Human), this protein is Transmembrane protein 184A (TMEM184A).